The chain runs to 34 residues: DDIT3 upstream open reading frame protein (34 aa).

As to quaternary structure, interacts with DDIT3 (isoform 1).

It localises to the nucleus. The protein localises to the cytoplasm. Product of the upstream open reading frame (uORF) of DDIT3/CHOP that is specifically produced in absence of stress, thereby preventing translation of downstream stress effector DDIT3/CHOP. The chain is DDIT3 upstream open reading frame protein from Mus musculus (Mouse).